We begin with the raw amino-acid sequence, 360 residues long: MRTELFDFDLPTQNIALRPVSPRDAARMLVVRPSVPLEDRIVRDLPALLAPGDQLVVNDTRVIAAQLTGRRIGRGLEPKIEATLIKRLDGARWQALVKPAKKLLPGDVVRFGHDGRVCLLGHLDATVEAKGDAGEVTLAFSFHGPVLDQAIAEVGATPLPPYIASKRAPDAQDIADYQTMFASNEGAVAAPTAGLHFTAELETALAARGVGLHRITLHVGAGTFLPVKAEDTSEHRMHAEWGTISSGTAEALNAARAAGGRIVAVGTTSLRLLESAARDDGRIAPFADETSIFITPGYRFRAVDMLMTNFHLPRSTLFMLVSAFCGLDTMQAAYAHAIRTGYRFYSYGDASLLFRNDITP.

Belongs to the QueA family. Monomer.

The protein resides in the cytoplasm. It catalyses the reaction 7-aminomethyl-7-carbaguanosine(34) in tRNA + S-adenosyl-L-methionine = epoxyqueuosine(34) in tRNA + adenine + L-methionine + 2 H(+). The protein operates within tRNA modification; tRNA-queuosine biosynthesis. In terms of biological role, transfers and isomerizes the ribose moiety from AdoMet to the 7-aminomethyl group of 7-deazaguanine (preQ1-tRNA) to give epoxyqueuosine (oQ-tRNA). The chain is S-adenosylmethionine:tRNA ribosyltransferase-isomerase from Rhodopseudomonas palustris (strain TIE-1).